The sequence spans 169 residues: S-ribosylhomocysteine lyase (169 aa).

Histidine 54, histidine 58, and cysteine 128 together coordinate Fe cation.

The protein belongs to the LuxS family. In terms of assembly, homodimer. Fe cation serves as cofactor.

It catalyses the reaction S-(5-deoxy-D-ribos-5-yl)-L-homocysteine = (S)-4,5-dihydroxypentane-2,3-dione + L-homocysteine. In terms of biological role, involved in the synthesis of autoinducer 2 (AI-2) which is secreted by bacteria and is used to communicate both the cell density and the metabolic potential of the environment. The regulation of gene expression in response to changes in cell density is called quorum sensing. Catalyzes the transformation of S-ribosylhomocysteine (RHC) to homocysteine (HC) and 4,5-dihydroxy-2,3-pentadione (DPD). The chain is S-ribosylhomocysteine lyase from Shewanella baltica (strain OS223).